We begin with the raw amino-acid sequence, 274 residues long: MPELPEVKTVILHLKKLILDKTISKIEIFIPKMIKEISSEEFKKYLENETIFNIENEGKFIVFFLSNNKIMLSHLRMEGGYNFYSKKRQKEIHDRLIFHFTDGSSLHYHDSRMFGTFHFRNSENYLKIKPLSLVAPVPWKIDLDEFFKLLKRKKTAIKKILLDQQIIAGLGNIYVDETLFASKVHPEFKANQLSLEQVKLILKNATRILQESTKLGGSSIRSYTSLNEKEGSFQNFLQVHTKFNKPCPNCGELIQKIKLGGRGTYFCKKCQQLN.

Pro2 (schiff-base intermediate with DNA) is an active-site residue. Glu3 (proton donor) is an active-site residue. The Proton donor; for beta-elimination activity role is filled by Lys59. Residues His93, Arg112, and Lys153 each coordinate DNA. An FPG-type zinc finger spans residues Gln238 to Gln272. Arg262 acts as the Proton donor; for delta-elimination activity in catalysis.

The protein belongs to the FPG family. Monomer. Requires Zn(2+) as cofactor.

It carries out the reaction Hydrolysis of DNA containing ring-opened 7-methylguanine residues, releasing 2,6-diamino-4-hydroxy-5-(N-methyl)formamidopyrimidine.. The catalysed reaction is 2'-deoxyribonucleotide-(2'-deoxyribose 5'-phosphate)-2'-deoxyribonucleotide-DNA = a 3'-end 2'-deoxyribonucleotide-(2,3-dehydro-2,3-deoxyribose 5'-phosphate)-DNA + a 5'-end 5'-phospho-2'-deoxyribonucleoside-DNA + H(+). Involved in base excision repair of DNA damaged by oxidation or by mutagenic agents. Acts as a DNA glycosylase that recognizes and removes damaged bases. Has a preference for oxidized purines, such as 7,8-dihydro-8-oxoguanine (8-oxoG). Has AP (apurinic/apyrimidinic) lyase activity and introduces nicks in the DNA strand. Cleaves the DNA backbone by beta-delta elimination to generate a single-strand break at the site of the removed base with both 3'- and 5'-phosphates. The protein is Formamidopyrimidine-DNA glycosylase of Mycoplasma mobile (strain ATCC 43663 / 163K / NCTC 11711) (Mesomycoplasma mobile).